The sequence spans 177 residues: Peptide methionine sulfoxide reductase MsrA (177 aa).

The active site involves Cys15.

This sequence belongs to the MsrA Met sulfoxide reductase family.

The catalysed reaction is L-methionyl-[protein] + [thioredoxin]-disulfide + H2O = L-methionyl-(S)-S-oxide-[protein] + [thioredoxin]-dithiol. It carries out the reaction [thioredoxin]-disulfide + L-methionine + H2O = L-methionine (S)-S-oxide + [thioredoxin]-dithiol. Its function is as follows. Has an important function as a repair enzyme for proteins that have been inactivated by oxidation. Catalyzes the reversible oxidation-reduction of methionine sulfoxide in proteins to methionine. In Listeria innocua serovar 6a (strain ATCC BAA-680 / CLIP 11262), this protein is Peptide methionine sulfoxide reductase MsrA.